The chain runs to 261 residues: Indole-3-glycerol phosphate synthase (261 aa).

It belongs to the TrpC family.

The enzyme catalyses 1-(2-carboxyphenylamino)-1-deoxy-D-ribulose 5-phosphate + H(+) = (1S,2R)-1-C-(indol-3-yl)glycerol 3-phosphate + CO2 + H2O. It participates in amino-acid biosynthesis; L-tryptophan biosynthesis; L-tryptophan from chorismate: step 4/5. In Paraburkholderia phytofirmans (strain DSM 17436 / LMG 22146 / PsJN) (Burkholderia phytofirmans), this protein is Indole-3-glycerol phosphate synthase.